The primary structure comprises 421 residues: Trimethyllysine dioxygenase, mitochondrial (421 aa).

Residues 1–15 (MWYHRLSHLHSRLQD) constitute a mitochondrion transit peptide. An N6-acetyllysine mark is found at Lys-179 and Lys-236. 3 residues coordinate Fe cation: His-242, Asp-244, and His-389.

Belongs to the gamma-BBH/TMLD family. Homodimer. Fe(2+) serves as cofactor. It depends on L-ascorbate as a cofactor. As to expression, all isoforms, but isoform 8, are widely expressed in adult and fetal tissues. Isoform 8 is restricted to heart and skeletal muscle.

It is found in the mitochondrion matrix. The catalysed reaction is N(6),N(6),N(6)-trimethyl-L-lysine + 2-oxoglutarate + O2 = (3S)-3-hydroxy-N(6),N(6),N(6)-trimethyl-L-lysine + succinate + CO2. The protein operates within amine and polyamine biosynthesis; carnitine biosynthesis. In terms of biological role, converts trimethyllysine (TML) into hydroxytrimethyllysine (HTML). In Homo sapiens (Human), this protein is Trimethyllysine dioxygenase, mitochondrial (TMLHE).